We begin with the raw amino-acid sequence, 251 residues long: Hydroxyacylglutathione hydrolase (251 aa).

7 residues coordinate Zn(2+): H58, H60, D62, H63, H116, D135, and H173.

Belongs to the metallo-beta-lactamase superfamily. Glyoxalase II family. In terms of assembly, monomer. The cofactor is Zn(2+).

It carries out the reaction an S-(2-hydroxyacyl)glutathione + H2O = a 2-hydroxy carboxylate + glutathione + H(+). It participates in secondary metabolite metabolism; methylglyoxal degradation; (R)-lactate from methylglyoxal: step 2/2. Functionally, thiolesterase that catalyzes the hydrolysis of S-D-lactoyl-glutathione to form glutathione and D-lactic acid. This Bdellovibrio bacteriovorus (strain ATCC 15356 / DSM 50701 / NCIMB 9529 / HD100) protein is Hydroxyacylglutathione hydrolase.